The chain runs to 436 residues: Alpha-galactosidase mel1 (436 aa).

Residues Met-1 to Gly-24 form the signal peptide. A disulfide bond links Cys-45 and Cys-77. Asn-84 carries an N-linked (GlcNAc...) asparagine glycan. Residues Cys-126 and Cys-156 are joined by a disulfide bond. Asp-154 (nucleophile) is an active-site residue. A glycan (N-linked (GlcNAc...) asparagine) is linked at Asn-180. Catalysis depends on Asp-214, which acts as the Proton donor.

Belongs to the glycosyl hydrolase 27 family.

Its subcellular location is the endoplasmic reticulum lumen. The protein resides in the secreted. The enzyme catalyses Hydrolysis of terminal, non-reducing alpha-D-galactose residues in alpha-D-galactosides, including galactose oligosaccharides, galactomannans and galactolipids.. Its function is as follows. Secreted alpha-galactosidase required for catabolic conversion of melibiose to glucose and galactose. The chain is Alpha-galactosidase mel1 (mel1) from Schizosaccharomyces pombe (strain 972 / ATCC 24843) (Fission yeast).